An 88-amino-acid polypeptide reads, in one-letter code: Elongation factor 1-beta (88 aa).

The protein belongs to the EF-1-beta/EF-1-delta family.

Its function is as follows. Promotes the exchange of GDP for GTP in EF-1-alpha/GDP, thus allowing the regeneration of EF-1-alpha/GTP that could then be used to form the ternary complex EF-1-alpha/GTP/AAtRNA. The protein is Elongation factor 1-beta (ef1b) of Thermoplasma acidophilum (strain ATCC 25905 / DSM 1728 / JCM 9062 / NBRC 15155 / AMRC-C165).